The following is a 233-amino-acid chain: Probable RNA 2'-phosphotransferase (233 aa).

It belongs to the KptA/TPT1 family.

Removes the 2'-phosphate from RNA via an intermediate in which the phosphate is ADP-ribosylated by NAD followed by a presumed transesterification to release the RNA and generate ADP-ribose 1''-2''-cyclic phosphate (APPR&gt;P). May function as an ADP-ribosylase. The protein is Probable RNA 2'-phosphotransferase of Hyperthermus butylicus (strain DSM 5456 / JCM 9403 / PLM1-5).